Here is a 115-residue protein sequence, read N- to C-terminus: UPF0738 protein SH1953 (115 aa).

The protein belongs to the UPF0738 family.

This Staphylococcus haemolyticus (strain JCSC1435) protein is UPF0738 protein SH1953.